The sequence spans 266 residues: 3-methyl-2-oxobutanoate hydroxymethyltransferase (266 aa).

Mg(2+) is bound by residues Asp-45 and Asp-84. 3-methyl-2-oxobutanoate-binding positions include 45–46 (DS), Asp-84, and Lys-112. Glu-114 lines the Mg(2+) pocket. The Proton acceptor role is filled by Glu-181.

This sequence belongs to the PanB family. Homodecamer; pentamer of dimers. It depends on Mg(2+) as a cofactor.

The protein localises to the cytoplasm. It catalyses the reaction 3-methyl-2-oxobutanoate + (6R)-5,10-methylene-5,6,7,8-tetrahydrofolate + H2O = 2-dehydropantoate + (6S)-5,6,7,8-tetrahydrofolate. It functions in the pathway cofactor biosynthesis; (R)-pantothenate biosynthesis; (R)-pantoate from 3-methyl-2-oxobutanoate: step 1/2. Catalyzes the reversible reaction in which hydroxymethyl group from 5,10-methylenetetrahydrofolate is transferred onto alpha-ketoisovalerate to form ketopantoate. The polypeptide is 3-methyl-2-oxobutanoate hydroxymethyltransferase (Stutzerimonas stutzeri (strain A1501) (Pseudomonas stutzeri)).